We begin with the raw amino-acid sequence, 487 residues long: Probable cytochrome P450 313a5 (487 aa).

Tyr-223 is subject to Phosphotyrosine. Residue Cys-433 coordinates heme.

It belongs to the cytochrome P450 family. Heme serves as cofactor.

The protein localises to the endoplasmic reticulum membrane. It localises to the microsome membrane. In terms of biological role, may be involved in the metabolism of insect hormones and in the breakdown of synthetic insecticides. In Drosophila melanogaster (Fruit fly), this protein is Probable cytochrome P450 313a5 (Cyp313a5).